Here is a 338-residue protein sequence, read N- to C-terminus: tRNA methyltransferase 10 homolog A (338 aa).

Disordered stretches follow at residues 1–91 (MSSE…DRKR) and 296–338 (RVEG…SVPH). Ser-22 is modified (phosphoserine). A coiled-coil region spans residues 52-80 (KQWEEQRELRKQKRKEKRKRKQLERQCQP). A compositionally biased stretch (basic residues) spans 61 to 73 (RKQKRKEKRKRKQ). The SAM-dependent MTase TRM10-type domain occupies 88 to 279 (DRKRIRRDVV…TILPQRKGAV (192 aa)). The segment covering 308–328 (EENRHELDSTHEEEKQDKENS) has biased composition (basic and acidic residues). Positions 329-338 (TESTVNSVPH) are enriched in polar residues. Ser-335 bears the Phosphoserine mark.

This sequence belongs to the class IV-like SAM-binding methyltransferase superfamily. TRM10 family. In terms of assembly, interacts with tRNA.

The protein resides in the nucleus. Its subcellular location is the nucleolus. It catalyses the reaction guanosine(9) in tRNA + S-adenosyl-L-methionine = N(1)-methylguanosine(9) in tRNA + S-adenosyl-L-homocysteine + H(+). S-adenosyl-L-methionine-dependent guanine N(1)-methyltransferase that catalyzes the formation of N(1)-methylguanine at position 9 (m1G9) in tRNAs. Probably not able to catalyze formation of N(1)-methyladenine at position 9 (m1A9) in tRNAs. The polypeptide is tRNA methyltransferase 10 homolog A (TRMT10A) (Bos taurus (Bovine)).